Here is a 150-residue protein sequence, read N- to C-terminus: Troponin C, isoform 2A (150 aa).

The residue at position 1 (methionine 1) is an N-acetylmethionine. EF-hand domains lie at 7 to 42 (EQIGALQKAFDSFDTDSKGFITPETVGVILRMMGVK), 43 to 78 (ISEKNLQEVIAETDEDGSGELEFEEFVELAAKFLIE), 83 to 118 (ALKTELREAFRVYDKEGNGYITTDVLKEILRELDNR), and 119 to 150 (LTEEDLDSIIEEVDEDGSGTLDFNEFMEMMNG). The Ca(2+) site is built by aspartate 56, aspartate 58, serine 60, glutamate 62, and glutamate 67. Ca(2+) is bound by residues aspartate 132, aspartate 134, serine 136, threonine 138, and glutamate 143.

Belongs to the troponin C family.

Functionally, troponin is the central regulatory protein of striated muscle contraction. Tn consists of three components: Tn-I which is the inhibitor of actomyosin ATPase, Tn-T which contains the binding site for tropomyosin and Tn-C. The binding of calcium to Tn-C abolishes the inhibitory action of Tn on actin filaments. This is Troponin C, isoform 2A from Homarus americanus (American lobster).